A 178-amino-acid polypeptide reads, in one-letter code: DNA-directed RNA polymerase subunit beta (178 aa).

Belongs to the RNA polymerase beta chain family. The RNAP catalytic core consists of 2 alpha, 1 beta, 1 beta' and 1 omega subunit. When a sigma factor is associated with the core the holoenzyme is formed, which can initiate transcription.

The catalysed reaction is RNA(n) + a ribonucleoside 5'-triphosphate = RNA(n+1) + diphosphate. Functionally, DNA-dependent RNA polymerase catalyzes the transcription of DNA into RNA using the four ribonucleoside triphosphates as substrates. This Liberibacter asiaticus (Citrus greening disease) protein is DNA-directed RNA polymerase subunit beta (rpoB).